Here is a 551-residue protein sequence, read N- to C-terminus: Serine beta-lactamase-like protein LACTB, mitochondrial (551 aa).

A mitochondrion-targeting transit peptide spans 1–113; the sequence is MYRLLSSVTA…RAIESSRDLL (113 aa). The disordered stretch occupies residues 69–101; sequence PADPEASGTTELSHEQALSPGSPHTPAPPAARG. Catalysis depends on Ser162, which acts as the Acyl-ester intermediate. The segment at 237 to 287 is disordered; that stretch reads LKMVKGTPPPSDQEKELKEKGGKNNEKSDAPKAKVEQDSEARCRSAKPGKK. Positions 248 to 279 are enriched in basic and acidic residues; sequence DQEKELKEKGGKNNEKSDAPKAKVEQDSEARC. 2 positions are modified to N6-succinyllysine: Lys287 and Lys288. N6-acetyllysine occurs at positions 301 and 346.

Belongs to the peptidase S12 family. Expressed predominantly in liver.

It is found in the mitochondrion. Its function is as follows. Mitochondrial serine protease that acts as a regulator of mitochondrial lipid metabolism. Acts by decreasing protein levels of PISD, a mitochondrial enzyme that converts phosphatidylserine (PtdSer) to phosphatidylethanolamine (PtdEtn), thereby affecting mitochondrial lipid metabolism. It is unclear whether it acts directly by mediating proteolysis of PISD or by mediating proteolysis of another lipid metabolism protein. Acts as a tumor suppressor that has the ability to inhibit proliferation of multiple types of cancer cells: probably by promoting decreased levels of PISD, thereby affecting mitochondrial lipid metabolism. The protein is Serine beta-lactamase-like protein LACTB, mitochondrial of Mus musculus (Mouse).